Consider the following 205-residue polypeptide: uncharacterized protein (205 aa).

The next 5 helical transmembrane spans lie at 4–24, 105–125, 130–150, 151–171, and 182–202; these read LAFLILLIVFSNLSLVNAIDD, KWFIAISILILGIILATLWIL, FLLFLAIFGLIVPFLQFKIPN, WLFNILALPLFVYIKFIVPEC, and ITIPISMYGWILIGLAVKFII.

Its subcellular location is the cell membrane. This is an uncharacterized protein from Methanocaldococcus jannaschii (strain ATCC 43067 / DSM 2661 / JAL-1 / JCM 10045 / NBRC 100440) (Methanococcus jannaschii).